The primary structure comprises 304 residues: Protease HtpX homolog (304 aa).

Transmembrane regions (helical) follow at residues 14–34 (IFII…IGII) and 39–59 (YLNG…IMVM). His144 serves as a coordination point for Zn(2+). Glu145 is a catalytic residue. His148 is a binding site for Zn(2+). Transmembrane regions (helical) follow at residues 159–179 (IAIA…RMIF) and 202–222 (AIIY…ATAI). Residue Glu231 coordinates Zn(2+).

The protein belongs to the peptidase M48B family. The cofactor is Zn(2+).

The protein resides in the cell membrane. The sequence is that of Protease HtpX homolog from Listeria monocytogenes serotype 4b (strain CLIP80459).